Here is a 772-residue protein sequence, read N- to C-terminus: Metabotropic glutamate receptor-like protein G (772 aa).

The signal sequence occupies residues 1–23; it reads MKKIIFLVLFLIFIFKDIKSSYG. The Extracellular portion of the chain corresponds to 24–391; the sequence is VDLVNFKMIT…TQVKFSPSIQ (368 aa). N-linked (GlcNAc...) asparagine glycans are attached at residues N73, N126, N262, N313, N343, and N378. Residues 392–412 traverse the membrane as a helical segment; that stretch reads IGVSIVSGVLIAIVLLSMVGV. Over 413 to 426 the chain is Cytoplasmic; the sequence is YKYRASSSIRSASP. Residues 427–447 form a helical membrane-spanning segment; it reads IFLIFILFGALIVFGGIILWV. Over 448–463 the chain is Extracellular; the sequence is SELNDHVCNGRLWMVT. The helical transmembrane segment at 464–484 threads the bilayer; it reads LGFSTLIGSLVVKNFRIWLIF. Residues 485–500 are Cytoplasmic-facing; that stretch reads DNPELKTVKITNYQLY. A helical membrane pass occupies residues 501-521; that stretch reads PWVACCLVINIILMSILTSLG. The Extracellular portion of the chain corresponds to 522–551; the sequence is DLREVDATGIDSLGKYEFLKICKMNNSGAS. An N-linked (GlcNAc...) asparagine glycan is attached at N546. A helical membrane pass occupies residues 552–572; the sequence is VLYTILAYFGALLLTGVFVSW. Over 573–586 the chain is Cytoplasmic; that stretch reads KIRIVDIEEFNESR. Residues 587-607 traverse the membrane as a helical segment; sequence AIAHTLYAISFCLFVIVPLMI. At 608 to 616 the chain is on the extracellular side; it reads SPLEKQSET. The helical transmembrane segment at 617 to 637 threads the bilayer; sequence IILSVAGLFITTAAVLIIFLP. The Cytoplasmic portion of the chain corresponds to 638–772; the sequence is KFYRVYEYGE…QIEPDEKNQD (135 aa). A disordered region spans residues 664 to 772; that stretch reads TARAESHKSS…QIEPDEKNQD (109 aa). Residues 718 to 728 are compositionally biased toward acidic residues; it reads FTEESVSEIDE. The span at 740–753 shows a compositional bias: low complexity; it reads PEINQSEQQNSEIE. Residues 754–763 show a composition bias toward pro residues; sequence QPPPPPPPQQ.

The protein in the N-terminal section; belongs to the BMP lipoprotein family. It in the C-terminal section; belongs to the G-protein coupled receptor 3 family. GABA-B receptor subfamily.

It is found in the membrane. In Dictyostelium discoideum (Social amoeba), this protein is Metabotropic glutamate receptor-like protein G (grlG).